Reading from the N-terminus, the 54-residue chain is UPF0391 membrane protein Reut_A0124 (54 aa).

The next 2 helical transmembrane spans lie at 5 to 25 and 30 to 50; these read ALVF…GIAA and IAKI…VMGL.

The protein belongs to the UPF0391 family.

Its subcellular location is the cell membrane. The chain is UPF0391 membrane protein Reut_A0124 from Cupriavidus pinatubonensis (strain JMP 134 / LMG 1197) (Cupriavidus necator (strain JMP 134)).